The primary structure comprises 211 residues: MLTIALSKGRILDDTLPLLAEAGIVPTENPDKSRKLIIPTTQDDVRLLIVRATDVPTYVEHGAADLGVAGKDVLMEYGGQGLYEPLDLQIAQCKLMTAGVTGAPEPKGRLRVATKFVNVAKRYYAEQGRQVDIIKLYGSMELAPLINLADKIIDVVDTGNTLRANGLEPQELIATISSRLVVNKASMKMQHARIQSLIDTLRNAVESRHRG.

The protein belongs to the ATP phosphoribosyltransferase family. Short subfamily. As to quaternary structure, heteromultimer composed of HisG and HisZ subunits.

It is found in the cytoplasm. It carries out the reaction 1-(5-phospho-beta-D-ribosyl)-ATP + diphosphate = 5-phospho-alpha-D-ribose 1-diphosphate + ATP. It participates in amino-acid biosynthesis; L-histidine biosynthesis; L-histidine from 5-phospho-alpha-D-ribose 1-diphosphate: step 1/9. Its function is as follows. Catalyzes the condensation of ATP and 5-phosphoribose 1-diphosphate to form N'-(5'-phosphoribosyl)-ATP (PR-ATP). Has a crucial role in the pathway because the rate of histidine biosynthesis seems to be controlled primarily by regulation of HisG enzymatic activity. In Pseudomonas entomophila (strain L48), this protein is ATP phosphoribosyltransferase.